A 72-amino-acid polypeptide reads, in one-letter code: Small, acid-soluble spore protein 1 (72 aa).

It belongs to the alpha/beta-type SASP family.

Its function is as follows. SASP are bound to spore DNA. They are double-stranded DNA-binding proteins that cause DNA to change to an a-like conformation. They protect the DNA backbone from chemical and enzymatic cleavage and are thus involved in dormant spore's high resistance to UV light. The chain is Small, acid-soluble spore protein 1 (Sh-1) from Halobacillus halophilus (strain ATCC 35676 / DSM 2266 / JCM 20832 / KCTC 3685 / LMG 17431 / NBRC 102448 / NCIMB 2269) (Sporosarcina halophila).